The chain runs to 121 residues: Large ribosomal subunit protein bL12 (121 aa).

The protein belongs to the bacterial ribosomal protein bL12 family. As to quaternary structure, homodimer. Part of the ribosomal stalk of the 50S ribosomal subunit. Forms a multimeric L10(L12)X complex, where L10 forms an elongated spine to which 2 to 4 L12 dimers bind in a sequential fashion. Binds GTP-bound translation factors.

Its function is as follows. Forms part of the ribosomal stalk which helps the ribosome interact with GTP-bound translation factors. Is thus essential for accurate translation. In Lactococcus lactis subsp. lactis (strain IL1403) (Streptococcus lactis), this protein is Large ribosomal subunit protein bL12.